The sequence spans 170 residues: 2-oxo-4-hydroxy-4-carboxy-5-ureidoimidazoline decarboxylase (170 aa).

The active-site Proton donor is H67. Residues P68, 84–88 (SQREQ), and 119–123 (FVLAL) contribute to the substrate site.

This sequence belongs to the OHCU decarboxylase family.

It localises to the peroxisome. The catalysed reaction is 5-hydroxy-2-oxo-4-ureido-2,5-dihydro-1H-imidazole-5-carboxylate + H(+) = (S)-allantoin + CO2. It functions in the pathway purine metabolism; urate degradation; (S)-allantoin from urate: step 3/3. Its function is as follows. Catalyzes the stereoselective decarboxylation of 2-oxo-4-hydroxy-4-carboxy-5-ureidoimidazoline (OHCU) to (S)-allantoin. This is 2-oxo-4-hydroxy-4-carboxy-5-ureidoimidazoline decarboxylase (URAD) from Bos taurus (Bovine).